The following is a 467-amino-acid chain: DNA polymerase IV (467 aa).

The UmuC domain maps to 5–187 (VLHIDMDAFF…LPVGALWGVG (183 aa)). The Mg(2+) site is built by aspartate 9 and aspartate 104. The active site involves glutamate 105. Disordered stretches follow at residues 364 to 386 (PDTD…VEAP) and 428 to 449 (TKGR…DPLD).

This sequence belongs to the DNA polymerase type-Y family. Monomer. Mg(2+) is required as a cofactor.

It localises to the cytoplasm. It catalyses the reaction DNA(n) + a 2'-deoxyribonucleoside 5'-triphosphate = DNA(n+1) + diphosphate. Functionally, poorly processive, error-prone DNA polymerase involved in untargeted mutagenesis. Copies undamaged DNA at stalled replication forks, which arise in vivo from mismatched or misaligned primer ends. These misaligned primers can be extended by PolIV. Exhibits no 3'-5' exonuclease (proofreading) activity. May be involved in translesional synthesis, in conjunction with the beta clamp from PolIII. The sequence is that of DNA polymerase IV from Corynebacterium glutamicum (strain R).